The chain runs to 252 residues: MSWNLFKGGPKKQIVPKTVERDFEREYGKLQQLEDQIKKLQKDMKKSIEADLAMSKSAVRISSDLLGNPLCEPDVDFLQMVTALDTAMKRMDAFNQEKVNQIQKTVMDPLKRYSSVFPSLNMAVKRREQALQDYKRLQTKVEKYEEKDKTGAMIAKLHQAREELRPVRDDFEAKNHQLLDEMPKFYNSRTDFFKPSFQSLIRAQVVYYTEMSRVFGDLAQQVDEVQLSDAEREQENEARLAELRSLSIVADD.

The region spanning 8–231 is the BAR domain; that stretch reads GGPKKQIVPK…VDEVQLSDAE (224 aa). 3 coiled-coil regions span residues 17-57, 119-150, and 224-244; these read KTVE…MSKS, SLNM…KDKT, and EVQL…AELR.

It localises to the cytoplasm. The protein localises to the cytoskeleton. In terms of biological role, involved in cytokinesis and septation where it has a role in the localization of F-actin. The chain is Bridging integrator 3 homolog (bin3) from Xenopus laevis (African clawed frog).